Consider the following 80-residue polypeptide: MSLEILEQLEAKVQMAVDTIALLQMEVEELKETNAALTQDLEQANNGRSEVEQEAQRARDEQAQFEARIRGLLGKMDEVE.

The stretch at 3-80 forms a coiled coil; that stretch reads LEILEQLEAK…GLLGKMDEVE (78 aa). The segment at 41–60 is disordered; it reads LEQANNGRSEVEQEAQRARD. Positions 49–60 are enriched in basic and acidic residues; that stretch reads SEVEQEAQRARD.

Belongs to the ZapB family. Homodimer. The ends of the coiled-coil dimer bind to each other, forming polymers. Interacts with FtsZ.

The protein localises to the cytoplasm. Functionally, non-essential, abundant cell division factor that is required for proper Z-ring formation. It is recruited early to the divisome by direct interaction with FtsZ, stimulating Z-ring assembly and thereby promoting cell division earlier in the cell cycle. Its recruitment to the Z-ring requires functional FtsA or ZipA. The protein is Cell division protein ZapB of Aliivibrio fischeri (strain ATCC 700601 / ES114) (Vibrio fischeri).